The chain runs to 172 residues: 3-hydroxydecanoyl-[acyl-carrier-protein] dehydratase (172 aa).

Histidine 71 is an active-site residue.

This sequence belongs to the thioester dehydratase family. FabA subfamily. In terms of assembly, homodimer.

It is found in the cytoplasm. The enzyme catalyses a (3R)-hydroxyacyl-[ACP] = a (2E)-enoyl-[ACP] + H2O. It catalyses the reaction (3R)-hydroxydecanoyl-[ACP] = (2E)-decenoyl-[ACP] + H2O. It carries out the reaction (2E)-decenoyl-[ACP] = (3Z)-decenoyl-[ACP]. It participates in lipid metabolism; fatty acid biosynthesis. Necessary for the introduction of cis unsaturation into fatty acids. Catalyzes the dehydration of (3R)-3-hydroxydecanoyl-ACP to E-(2)-decenoyl-ACP and then its isomerization to Z-(3)-decenoyl-ACP. Can catalyze the dehydratase reaction for beta-hydroxyacyl-ACPs with saturated chain lengths up to 16:0, being most active on intermediate chain length. This chain is 3-hydroxydecanoyl-[acyl-carrier-protein] dehydratase, found in Escherichia coli (strain 55989 / EAEC).